The primary structure comprises 124 residues: Large ribosomal subunit protein bL12 (124 aa).

The protein belongs to the bacterial ribosomal protein bL12 family. Homodimer. Part of the ribosomal stalk of the 50S ribosomal subunit. Forms a multimeric L10(L12)X complex, where L10 forms an elongated spine to which 2 to 4 L12 dimers bind in a sequential fashion. Binds GTP-bound translation factors.

Forms part of the ribosomal stalk which helps the ribosome interact with GTP-bound translation factors. Is thus essential for accurate translation. The protein is Large ribosomal subunit protein bL12 of Ralstonia pickettii (strain 12J).